Reading from the N-terminus, the 414-residue chain is Glucose-6-phosphate isomerase (414 aa).

The Proton donor role is filled by Glu-266. Catalysis depends on residues His-292 and Lys-405.

Belongs to the GPI family.

The protein resides in the cytoplasm. The enzyme catalyses alpha-D-glucose 6-phosphate = beta-D-fructose 6-phosphate. Its pathway is carbohydrate biosynthesis; gluconeogenesis. The protein operates within carbohydrate degradation; glycolysis; D-glyceraldehyde 3-phosphate and glycerone phosphate from D-glucose: step 2/4. In terms of biological role, catalyzes the reversible isomerization of glucose-6-phosphate to fructose-6-phosphate. This is Glucose-6-phosphate isomerase from Thermus thermophilus (strain ATCC BAA-163 / DSM 7039 / HB27).